The chain runs to 750 residues: MTIRSPEPEVKIMVEKDPVKTSFEKWAKPGHFSRTLAKGPNTTTWIWNLHADAHDFDSHTNDLEEISRKVFSAHFGQLAVIFIWLSGMYFHGARFSNYEAWLSDPTHIKPSAQVVWPIVGQKILNGDVGGGFQGIQITSGFFQLWRASGITSELQLYTTAIGGLIFAALMLFAGWFHYHKAAPKLAWFQNVESMLNHHLAGLLGLGSLAWAGHQVHVSLPINRLLDAGVDPKEIPLPHEFILNRDLLAQLYPSFSKGLTPFFTLNWSEYSDFLTFRGGLNPVTGGLWLTDTAHHHLAIAVLFLVAGHMYRTNFGIGHSMKEILEAHKGPFTGEGHKGLYEILTTSWHAQLAINLAMLGSLTIIVAHHMYAMPPYPYLATDYATQLSLFTHHMWIGGFLVVGAAAHAAIFMVRDYDPTTQYNNLLDRVLRHRDAIISHLNWVCIFLGFHSFGLYIHNDTMSALGRPQDMFSDTAIQLQPVFAQWIQNTHALAPSLTAPNATASTSLTWGGGDLVAVGGKVALLPIPLGTADFLVHHIHAFTIHVTVLILLKGVLFARSSRLIPDKANLGFRFPCDGPGRGGTCQVSAWDHVFLGLFWMYNAISVVIFHFSWKMQSDVWGSISDQGVVTHITGGNFAQSSITINGWLRDFLWAQASQVIQSYGSSLSAYGLLFLGAHFVWAFSLMFLFSGRGYWQELIESIVWAHNKLKVAPAIQPRALSIVQGRAVGVAHYLLGGIATTWAFFLARIISVG.

A run of 8 helical transmembrane segments spans residues 70-93, 156-179, 195-219, 291-309, 346-369, 385-411, 433-455, and 531-549; these read VFSAHFGQLAVIFIWLSGMYFHGA, LYTTAIGGLIFAALMLFAGWFHYH, LNHHLAGLLGLGSLAWAGHQVHVSL, TAHHHLAIAVLFLVAGHMY, WHAQLAINLAMLGSLTIIVAHHMY, LSLFTHHMWIGGFLVVGAAAHAAIFMV, AIISHLNWVCIFLGFHSFGLYIH, and FLVHHIHAFTIHVTVLILL. [4Fe-4S] cluster is bound by residues cysteine 573 and cysteine 582. Transmembrane regions (helical) follow at residues 589 to 610 and 664 to 686; these read HVFLGLFWMYNAISVVIFHFSW and LSAYGLLFLGAHFVWAFSLMFLF. A chlorophyll a'-binding site is contributed by histidine 675. The chlorophyll a site is built by methionine 683 and tyrosine 691. Tryptophan 692 is a phylloquinone binding site. The helical transmembrane segment at 724 to 744 threads the bilayer; that stretch reads AVGVAHYLLGGIATTWAFFLA.

Belongs to the PsaA/PsaB family. As to quaternary structure, the PsaA/B heterodimer binds the P700 chlorophyll special pair and subsequent electron acceptors. PSI consists of a core antenna complex that captures photons, and an electron transfer chain that converts photonic excitation into a charge separation. The eukaryotic PSI reaction center is composed of at least 11 subunits. P700 is a chlorophyll a/chlorophyll a' dimer, A0 is one or more chlorophyll a, A1 is one or both phylloquinones and FX is a shared 4Fe-4S iron-sulfur center. is required as a cofactor.

It localises to the plastid. The protein resides in the chloroplast thylakoid membrane. It catalyses the reaction reduced [plastocyanin] + hnu + oxidized [2Fe-2S]-[ferredoxin] = oxidized [plastocyanin] + reduced [2Fe-2S]-[ferredoxin]. Its function is as follows. PsaA and PsaB bind P700, the primary electron donor of photosystem I (PSI), as well as the electron acceptors A0, A1 and FX. PSI is a plastocyanin-ferredoxin oxidoreductase, converting photonic excitation into a charge separation, which transfers an electron from the donor P700 chlorophyll pair to the spectroscopically characterized acceptors A0, A1, FX, FA and FB in turn. Oxidized P700 is reduced on the lumenal side of the thylakoid membrane by plastocyanin. This chain is Photosystem I P700 chlorophyll a apoprotein A1, found in Physcomitrium patens (Spreading-leaved earth moss).